A 344-amino-acid chain; its full sequence is Protein RecA (344 aa).

65–72 (GPESSGKT) lines the ATP pocket. Over residues 323-337 (ELREKFQPAEAPREA) the composition is skewed to basic and acidic residues. Residues 323–344 (ELREKFQPAEAPREAGDDEDKE) form a disordered region.

The protein belongs to the RecA family.

Its subcellular location is the cytoplasm. Functionally, can catalyze the hydrolysis of ATP in the presence of single-stranded DNA, the ATP-dependent uptake of single-stranded DNA by duplex DNA, and the ATP-dependent hybridization of homologous single-stranded DNAs. It interacts with LexA causing its activation and leading to its autocatalytic cleavage. The protein is Protein RecA of Xanthomonas euvesicatoria pv. vesicatoria (strain 85-10) (Xanthomonas campestris pv. vesicatoria).